A 175-amino-acid polypeptide reads, in one-letter code: Protein MAL2 (175 aa).

The Cytoplasmic portion of the chain corresponds to M1–T33. Positions I30–R174 constitute an MARVEL domain. A helical membrane pass occupies residues Y34–A54. Residues S55–G65 lie on the Lumenal side of the membrane. A helical transmembrane segment spans residues W66–L86. Residues S87 to D101 are Cytoplasmic-facing. Residues F102–A122 form a helical membrane-spanning segment. The Lumenal segment spans residues T123–N148. N-linked (GlcNAc...) asparagine glycosylation is present at N131. The helical transmembrane segment at V149 to A169 threads the bilayer. The Cytoplasmic portion of the chain corresponds to L170–P175.

It belongs to the MAL family. In terms of assembly, interacts with TPD52L2.

The protein localises to the cell membrane. It localises to the apical cell membrane. Functionally, member of the machinery of polarized transport. Required for the indirect transcytotic route at the step of the egress of the transcytosing cargo from perinuclear endosomes in order for it to travel to the apical surface via a raft-dependent pathway. This Mus musculus (Mouse) protein is Protein MAL2 (Mal2).